The primary structure comprises 208 residues: Protein GrpE (208 aa).

The segment covering 1–25 (MVDNKDFNEELKENIQEELDNETKA) has biased composition (basic and acidic residues). The tract at residues 1 to 38 (MVDNKDFNEELKENIQEELDNETKAENPNIDEEVEEVS) is disordered. A compositionally biased stretch (acidic residues) spans 29–38 (NIDEEVEEVS).

It belongs to the GrpE family. As to quaternary structure, homodimer.

It localises to the cytoplasm. In terms of biological role, participates actively in the response to hyperosmotic and heat shock by preventing the aggregation of stress-denatured proteins, in association with DnaK and GrpE. It is the nucleotide exchange factor for DnaK and may function as a thermosensor. Unfolded proteins bind initially to DnaJ; upon interaction with the DnaJ-bound protein, DnaK hydrolyzes its bound ATP, resulting in the formation of a stable complex. GrpE releases ADP from DnaK; ATP binding to DnaK triggers the release of the substrate protein, thus completing the reaction cycle. Several rounds of ATP-dependent interactions between DnaJ, DnaK and GrpE are required for fully efficient folding. The polypeptide is Protein GrpE (Clostridium perfringens (strain ATCC 13124 / DSM 756 / JCM 1290 / NCIMB 6125 / NCTC 8237 / Type A)).